Here is a 192-residue protein sequence, read N- to C-terminus: BON1-associated protein 1 (192 aa).

The region spanning 1–119 (MIYFGRSIDN…RYSPEGHLNF (119 aa)) is the C2 domain.

Interacts with BON1 (via VWA domain), BON2 and BON3. As to expression, expressed in roots, leaves, stems and flowers.

It is found in the membrane. Its function is as follows. Negative regulator of cell death and defense responses. Exhibits calcium-dependent phospholipid binding properties. This chain is BON1-associated protein 1 (BAP1), found in Arabidopsis thaliana (Mouse-ear cress).